The following is a 431-amino-acid chain: Tol-Pal system protein TolB (431 aa).

The N-terminal stretch at 1-26 is a signal peptide; it reads MSLMTKLGFRALVASCLITAGSAANA. The tract at residues 411–431 is disordered; it reads PQILSVQGGSVREPSWGPFMQ.

It belongs to the TolB family. In terms of assembly, the Tol-Pal system is composed of five core proteins: the inner membrane proteins TolA, TolQ and TolR, the periplasmic protein TolB and the outer membrane protein Pal. They form a network linking the inner and outer membranes and the peptidoglycan layer.

The protein localises to the periplasm. Part of the Tol-Pal system, which plays a role in outer membrane invagination during cell division and is important for maintaining outer membrane integrity. This chain is Tol-Pal system protein TolB, found in Burkholderia lata (strain ATCC 17760 / DSM 23089 / LMG 22485 / NCIMB 9086 / R18194 / 383).